The sequence spans 845 residues: MSKLQQFPLSKGWSFRDNEATSEDAWMPVPVVPSVVHQDLQANNKLKDPYIGFNELEARWVNEKSWTYKTVFQKPAAPAGSCIVLAFDGLDTFAKVKLDGNVILENDNMFLARRVDVTKALEAEGDHVLEIDFDCAFLRAKELRKQDPRHNWASFNGDPSRLSVRKAQYHWGWDWGPVLMTAGIWREVRLEVYSARVADLWTEVQLASDHQSAQVTAFVEVESVHSGSHRACFTLSLHGQEITREEIGVTENGTAKATFDVKEPSLWWPHGYGDATLYEVSVSLVKEQEELHRVSKKFGIRTAEVIQRPDKHGKSFFFRVNGVDIFCGGSCWIPADNLLPSITAERYRKWIELMVHGRQVMIRVWGGGIYEDYSFYDACDELGVLVWQDFMFGCGNYPTWPNLLESIRKESVYNVRRLRHHPSIVIWVGNNEDYQVQEQAGLTYNYEDKDPENWLKTDFPARYIYEKLLPEVVQEYSPGTFYHPGSPWGDGKTTSDPTVGDMHQWNVWHGTQEKYQIFDTLGGRFNSEFGMEAFPHMSTIDYFVENEADKYPQSHVLDFHNKADGHERRIATYLVENLRTATDLETHIYLTQVVQAETMMFGYRGWRRQWGDERHCGGALLWQLNDCWPTISWAIVDYFLRPKPAFYAVARVLNPIAVGVRREHHDWSVTHAQPPKTSKFELWVASSRQQEIQGTVELRFLSVNTGLEVRERIVHENVSIVPNGTTNLIVDGLIDHTVHSEPHVLAARIWVDGQLVARDVDWPQPFKYLDLSDRGLEVKKISESEDEQTLLISTKKPVKCLVFEEREGVRISDSAMDIVPGDDQRVTIKGLKPGDAPLKYKFLGQ.

Residue Asn-252 is glycosylated (N-linked (GlcNAc...) asparagine). Catalysis depends on Glu-432, which acts as the Proton donor. N-linked (GlcNAc...) asparagine glycosylation is found at Asn-717 and Asn-723.

The protein belongs to the glycosyl hydrolase 2 family. Beta-mannosidase B subfamily.

It catalyses the reaction Hydrolysis of terminal, non-reducing beta-D-mannose residues in beta-D-mannosides.. It participates in glycan metabolism; N-glycan degradation. Exoglycosidase that cleaves the single beta-linked mannose residue from the non-reducing end of beta-mannosidic oligosaccharides of various complexity and length. Prefers mannobiose over mannotriose and has no activity against polymeric mannan. Is also severely restricted by galactosyl substitutions at the +1 subsite. This Aspergillus fumigatus (strain CBS 144.89 / FGSC A1163 / CEA10) (Neosartorya fumigata) protein is Beta-mannosidase B (mndB).